Reading from the N-terminus, the 56-residue chain is uncharacterized protein (56 aa).

This is an uncharacterized protein from Acheta domesticus (House cricket).